A 485-amino-acid polypeptide reads, in one-letter code: Glutamate--tRNA ligase 1 (485 aa).

The 'HIGH' region signature appears at 10-20 (PSPTGAIHIGN). Positions 252 to 256 (KLSKR) match the 'KMSKS' region motif. K255 contacts ATP.

It belongs to the class-I aminoacyl-tRNA synthetase family. Glutamate--tRNA ligase type 1 subfamily. As to quaternary structure, monomer.

The protein resides in the cytoplasm. The enzyme catalyses tRNA(Glu) + L-glutamate + ATP = L-glutamyl-tRNA(Glu) + AMP + diphosphate. Its function is as follows. Catalyzes the attachment of glutamate to tRNA(Glu) in a two-step reaction: glutamate is first activated by ATP to form Glu-AMP and then transferred to the acceptor end of tRNA(Glu). The polypeptide is Glutamate--tRNA ligase 1 (Thermoanaerobacter sp. (strain X514)).